The following is a 674-amino-acid chain: Fidgetin-like protein 1 (674 aa).

Positions 157–179 are disordered; that stretch reads SQESDSLPNSAHDRDRTQDFPES. Positions 167–179 are enriched in basic and acidic residues; it reads AHDRDRTQDFPES. A Glycyl lysine isopeptide (Lys-Gly) (interchain with G-Cter in SUMO2) cross-link involves residue lysine 225. Serine 259 carries the phosphoserine modification. The necessary and sufficient for interaction with RAD51 stretch occupies residues 295 to 344; that stretch reads FKTAKEQLWVDQQKKYHQPQRASGSSYGGVKKSLGASRSRGILGKFVPPI. Position 339 is an N6-acetyllysine (lysine 339). ATP-binding positions include alanine 404 and 444 to 449; that span reads GTGKTL.

The protein belongs to the AAA ATPase family. As to quaternary structure, hexamer. Interacts (via N-terminal one-half region) with RAD51; the interaction is direct. Interacts (via N-terminal one-half region) with SPIDR (via the C-terminal region); the interaction is direct. Interacts with FIRRM; may regulate homologous recombination. Mg(2+) is required as a cofactor.

The protein localises to the nucleus. Its subcellular location is the cytoplasm. It is found in the perinuclear region. It carries out the reaction ATP + H2O = ADP + phosphate + H(+). Its function is as follows. Involved in DNA double-strand break (DBS) repair via homologous recombination (HR). Recruited at DSB sites independently of BRCA2, RAD51 and RAD51 paralogs in a H2AX-dependent manner. May regulate osteoblast proliferation and differentiation. May play a role in the control of male meiosis dynamic. The polypeptide is Fidgetin-like protein 1 (FIGNL1) (Homo sapiens (Human)).